We begin with the raw amino-acid sequence, 192 residues long: BON1-associated protein 1 (192 aa).

Residues 1–119 enclose the C2 domain; the sequence is MIYFGRSIDN…RYSPEGHLNF (119 aa).

As to quaternary structure, interacts with BON1 (via VWA domain), BON2 and BON3. Expressed in roots, leaves, stems and flowers.

Its subcellular location is the membrane. In terms of biological role, negative regulator of cell death and defense responses. Exhibits calcium-dependent phospholipid binding properties. The protein is BON1-associated protein 1 (BAP1) of Arabidopsis thaliana (Mouse-ear cress).